A 369-amino-acid chain; its full sequence is H-2 class I histocompatibility antigen, K-B alpha chain (369 aa).

The first 21 residues, 1-21 (MVPCTLLLLLAAALAPTQTRA), serve as a signal peptide directing secretion. The alpha-1 stretch occupies residues 22-111 (GPHSLRYFVT…LLGYYNQSKG (90 aa)). Residues 22-305 (GPHSLRYFVT…EPPPSTVSNM (284 aa)) are Extracellular-facing. N-linked (GlcNAc...) asparagine glycosylation occurs at Asn-107. The tract at residues 112–203 (GSHTIQVISG…KNGNATLLRT (92 aa)) is alpha-2. Residues Cys-122 and Cys-185 are joined by a disulfide bond. N-linked (GlcNAc...) asparagine glycosylation occurs at Asn-197. Residues 204-295 (DSPKAHVTHH…GLPEPLTLRW (92 aa)) form an alpha-3 region. The Ig-like C1-type domain occupies 206 to 294 (PKAHVTHHSR…QGLPEPLTLR (89 aa)). Cys-224 and Cys-280 are disulfide-bonded. The interval 296–305 (EPPPSTVSNM) is connecting peptide. The chain crosses the membrane as a helical span at residues 306–328 (ATVAVLVVLGAAIVTGAVVAFVM). At 329–369 (KMRRRNTGGKGGDYALAPGSQTSDLSLPDCKVMVHDPHSLA) the chain is on the cytoplasmic side. Phosphoserine is present on residues Ser-351 and Ser-354.

Belongs to the MHC class I family. As to quaternary structure, heterodimer of an alpha chain and a beta chain (beta-2-microglobulin).

Its subcellular location is the membrane. Functionally, involved in the presentation of foreign antigens to the immune system. The polypeptide is H-2 class I histocompatibility antigen, K-B alpha chain (H2-K1) (Mus musculus (Mouse)).